The primary structure comprises 1036 residues: Vacuolar basic amino acid transporter VSB1 (1036 aa).

The Vacuolar portion of the chain corresponds to 1–213; sequence MGRTIRRRRS…SKFAHYLPAA (213 aa). Phosphoserine is present on residues Ser-42 and Ser-127. The residue at position 130 (Thr-130) is a Phosphothreonine. Residues Ser-140, Ser-144, Ser-149, Ser-152, and Ser-153 each carry the phosphoserine modification. The helical transmembrane segment at 214–234 threads the bilayer; the sequence is VLGLLLNILDALSYGMIIFPI. At 235-236 the chain is on the cytoplasmic side; that stretch reads TE. A helical transmembrane segment spans residues 237 to 257; it reads PVFSHLGPTGISMFYISTIIS. The Vacuolar portion of the chain corresponds to 258–269; that stretch reads QAVYSGGWSSFP. The helical transmembrane segment at 270–290 threads the bilayer; the sequence is SGIGSEMIEITPFYHTMALAI. At 291-300 the chain is on the cytoplasmic side; that stretch reads KEALAGNDDE. The chain crosses the membrane as a helical span at residues 301 to 321; that stretch reads IITTTIFCYVISSMLTGVVFY. Over 322-338 the chain is Vacuolar; it reads ALGKLRLGKIVGFFPRH. A helical membrane pass occupies residues 339–359; it reads ILIGCIGGVGYFLIITGIEVT. Over 360–375 the chain is Cytoplasmic; that stretch reads TRVAKFEYSWPFFSGL. The helical transmembrane segment at 376-396 threads the bilayer; the sequence is FTDYDTLAKWLLPVLLTVVLI. Over 397–405 the chain is Vacuolar; sequence GTQRYFKNS. Residues 406-426 form a helical membrane-spanning segment; that stretch reads LVLPSFYILTLVLFHFIVAII. Residues 427–473 lie on the Cytoplasmic side of the membrane; sequence PTLSLDALRQAGWIFPIANSDSKWYDHYRLFNVHKVHWSLVLQQIPT. Residues 474–494 traverse the membrane as a helical segment; the sequence is MMALTFFGILHVPINVPALAM. The Vacuolar segment spans residues 495–515; that stretch reads SLQMDKYDVDRELIAHGYSNF. The chain crosses the membrane as a helical span at residues 516–536; it reads FSGLLGSVQNYLVYTNSVLFI. The Cytoplasmic portion of the chain corresponds to 537 to 546; it reads RAGADSPFAG. A helical transmembrane segment spans residues 547–567; sequence FLLIALTICIMIIGPVIISFI. Pro-568 is a topological domain (vacuolar). Residues 569–589 traverse the membrane as a helical segment; the sequence is ICIVGSLIFLLGYELLVEALV. The Cytoplasmic portion of the chain corresponds to 590 to 604; the sequence is DTWNKLNRFEYLTVV. Residues 605–625 form a helical membrane-spanning segment; sequence IIVFTMGIFDFVLGIIVGILI. At 626-664 the chain is on the vacuolar side; that stretch reads ACFSFLVDSTKLQTINGEYNGNVARSTVYRDYVQTKFLD. The region spanning 660–781 is the STAS domain; the sequence is TKFLDGIGEQ…ADLNSALEWC (122 aa). The helical transmembrane segment at 665-685 threads the bilayer; that stretch reads GIGEQIYVLKLQNLLFFGTII. The Cytoplasmic portion of the chain corresponds to 686–1036; the sequence is SIEEKIERLL…ELLGYTLVSA (351 aa). A Phosphoserine modification is found at Ser-842. At Thr-847 the chain carries Phosphothreonine.

Its subcellular location is the vacuole membrane. In terms of biological role, amino acid transporter involved in vacuolar uptake of basic amino acids for storage during nitrogen replete condititions. May function as an amino acid/proton antiporter. The polypeptide is Vacuolar basic amino acid transporter VSB1 (Saccharomyces cerevisiae (strain ATCC 204508 / S288c) (Baker's yeast)).